We begin with the raw amino-acid sequence, 236 residues long: uncharacterized protein (236 aa).

This is an uncharacterized protein from Aquifex aeolicus (strain VF5).